The following is a 420-amino-acid chain: Mitogen-activated protein kinase HOG2 (420 aa).

ATP contacts are provided by residues 29–37 (VGMGAFGLV) and Lys-52. The active-site Proton acceptor is the Asp-144. A Phosphothreonine modification is found at Thr-174. Positions 174–176 (TGY) match the TXY motif. Tyr-176 is modified (phosphotyrosine). The segment at 372–394 (AQHHHQTQQQSSGKHTNPTTSSS) is disordered.

This sequence belongs to the protein kinase superfamily. Ser/Thr protein kinase family. MAP kinase subfamily. HOG1 sub-subfamily. Requires Mg(2+) as cofactor. Dually phosphorylated on Thr-174 and Tyr-176, which activates the enzyme.

The protein resides in the cytoplasm. It localises to the nucleus. The enzyme catalyses L-seryl-[protein] + ATP = O-phospho-L-seryl-[protein] + ADP + H(+). It carries out the reaction L-threonyl-[protein] + ATP = O-phospho-L-threonyl-[protein] + ADP + H(+). Activated by tyrosine and threonine phosphorylation. Functionally, mitogen-activated protein kinase involved in a signal transduction pathway that is activated by changes in the osmolarity of the extracellular environment. Controls osmotic regulation of transcription of target genes. The polypeptide is Mitogen-activated protein kinase HOG2 (HOG2) (Zygosaccharomyces rouxii).